Here is an 881-residue protein sequence, read N- to C-terminus: Interference hedgehog (881 aa).

The first 26 residues, 1-26, serve as a signal peptide directing secretion; it reads MSSSSSSLLLMMLLLLLLLLTSKLEA. Residues 27-693 lie on the Extracellular side of the membrane; the sequence is IPVLSSTSPS…NHNETYSLNP (667 aa). Ig-like C2-type domains are found at residues 37 to 138, 128 to 228, 242 to 330, and 336 to 425; these read PGVR…IARL, PLVV…IPSS, PYLL…YINV, and PVIV…LQVN. 3 disulfides stabilise this stretch: C60–C122, C167–C212, and C266–C314. 9 N-linked (GlcNAc...) asparagine glycosylation sites follow: N75, N98, N194, N201, N282, N349, N381, N430, and N455. An intrachain disulfide couples C358 to C407. 2 consecutive Fibronectin type-III domains span residues 450–558 and 566–661; these read PPSA…LQRG and VPEL…TQRS. R486, K492, and K494 together coordinate heparin. N517 is a glycosylation site (N-linked (GlcNAc...) asparagine). R532 provides a ligand contact to heparin. A glycan (N-linked (GlcNAc...) asparagine) is linked at N548. The segment at 655–685 is disordered; sequence QGRTQRSKLTTTEQPIQQKGGDRNVNTTPNH. Positions 656–671 are enriched in polar residues; it reads GRTQRSKLTTTEQPIQ. N686 carries N-linked (GlcNAc...) asparagine glycosylation. The helical transmembrane segment at 694 to 714 threads the bilayer; it reads LLTGTIGGGALLLLLLIAFSF. Residues 715 to 881 are Cytoplasmic-facing; it reads CLCRRKNRNG…SSGSLNSVGV (167 aa). Disordered regions lie at residues 768–791 and 809–881; these read NPLD…NSPH and PTTY…SVGV. The segment covering 837 to 855 has biased composition (polar residues); that stretch reads PGSNNNLQQIGSETTTTGQ. Over residues 865–881 the composition is skewed to low complexity; the sequence is SSRSENLSSGSLNSVGV.

The protein belongs to the immunoglobulin superfamily. IHOG family. Homodimer. Heterotetramer; 2 iHog chains bind 2 hh chains when facilitated by heparin, heparin is required to promote high-affinity interactions between hh and iHog.

Its subcellular location is the membrane. Its function is as follows. Mediates response to the active Hedgehog (Hh) protein signal in embryos, functioning upstream or at the level of patched (ptc). The protein is Interference hedgehog of Drosophila willistoni (Fruit fly).